Consider the following 151-residue polypeptide: Deoxyuridine 5'-triphosphate nucleotidohydrolase (151 aa).

Substrate-binding positions include 70–72 (RSG), Asn-83, 87–89 (LID), and Met-97.

It belongs to the dUTPase family. Mg(2+) is required as a cofactor.

The enzyme catalyses dUTP + H2O = dUMP + diphosphate + H(+). Its pathway is pyrimidine metabolism; dUMP biosynthesis; dUMP from dCTP (dUTP route): step 2/2. Functionally, this enzyme is involved in nucleotide metabolism: it produces dUMP, the immediate precursor of thymidine nucleotides and it decreases the intracellular concentration of dUTP so that uracil cannot be incorporated into DNA. The polypeptide is Deoxyuridine 5'-triphosphate nucleotidohydrolase (Pseudomonas putida (strain W619)).